A 247-amino-acid polypeptide reads, in one-letter code: MSHPSTLVLIPARMAATRLPGKPLLDIAGLPMIVHVLRRAEAADVGPVAVATDTAEIAAAVEAHGGRVVMTRADHPSGSDRVAEALGVLDPDGRIEIVVNLQGDFPTIRPDNIGAVLGPLADPAVDIATLCAEIHTEEEATNPNVVKVIGSPLSPARLRALYFTRATAPWGEGPRYHHIGLYAYRRAALQRFIALPPSALEQREKLEQLRALEAGMRIDVGIVDTVPRGVDTAADLETARRILSSRN.

This sequence belongs to the KdsB family.

It localises to the cytoplasm. It carries out the reaction 3-deoxy-alpha-D-manno-oct-2-ulosonate + CTP = CMP-3-deoxy-beta-D-manno-octulosonate + diphosphate. It functions in the pathway nucleotide-sugar biosynthesis; CMP-3-deoxy-D-manno-octulosonate biosynthesis; CMP-3-deoxy-D-manno-octulosonate from 3-deoxy-D-manno-octulosonate and CTP: step 1/1. The protein operates within bacterial outer membrane biogenesis; lipopolysaccharide biosynthesis. Functionally, activates KDO (a required 8-carbon sugar) for incorporation into bacterial lipopolysaccharide in Gram-negative bacteria. The sequence is that of 3-deoxy-manno-octulosonate cytidylyltransferase from Rhodopseudomonas palustris (strain BisA53).